We begin with the raw amino-acid sequence, 699 residues long: Elongation factor G (699 aa).

The region spanning 8 to 290 (NRYRNIGICA…AVIEFLPAPD (283 aa)) is the tr-type G domain. Residues 17 to 24 (AHVDAGKT), 88 to 92 (DTPGH), and 142 to 145 (NKMD) each bind GTP.

Belongs to the TRAFAC class translation factor GTPase superfamily. Classic translation factor GTPase family. EF-G/EF-2 subfamily.

The protein resides in the cytoplasm. Its function is as follows. Catalyzes the GTP-dependent ribosomal translocation step during translation elongation. During this step, the ribosome changes from the pre-translocational (PRE) to the post-translocational (POST) state as the newly formed A-site-bound peptidyl-tRNA and P-site-bound deacylated tRNA move to the P and E sites, respectively. Catalyzes the coordinated movement of the two tRNA molecules, the mRNA and conformational changes in the ribosome. This is Elongation factor G from Alcanivorax borkumensis (strain ATCC 700651 / DSM 11573 / NCIMB 13689 / SK2).